Reading from the N-terminus, the 402-residue chain is Beta-peptidyl aminopeptidase BapA (402 aa).

Positions 1 to 29 (MTSTQRLWSGALPLLTALIVSIAATASLA) are cleaved as a signal peptide. The active-site Nucleophile is the Ser-279. Active-site proton donor/acceptor residues include Ser-317 and Glu-319.

This sequence belongs to the peptidase S58 family. In terms of assembly, heterooctamer of 4 heterodimers ((alpha:beta)4); each heterodimer is composed of an alpha subunit and a beta subunit processed from the same precursor. Autoproteolytic processing to generate the alpha and beta subunit is required for self-activation and is proposed to use a similar mechanism as substrate cleavage.

It localises to the periplasm. It carries out the reaction Cleaves N-terminal beta-homoamino acids from peptides composed of 2 to 6 amino acids.. With respect to regulation, inhibited by AEBSF (4-(2-aminoethyl)benzenesulfonyl fluoride, Pefabloc SC), ampicillin and AMP(hyd) (ampillicin-derived penicilloic acid). Beta-aminopeptidase that can cleave synthetic beta-peptides which consist of backbone-elongated beta-amino acid residues that are not processed by common proteolytic enzymes. Can cleave the beta-peptides beta-homoVal-beta-homoAla-beta-homoLeu and beta-homoAla-beta-homoLeu. Requires a beta-amino acid at the N-terminus of peptide substrates and cleaves the peptide bond between the N-terminal beta-amino acid and the amino acid at the second position of tripeptidic substrates of the general structure H-betahXaa-Ile-betahTyr-OH according to the following preferences with regard to the side chain of the N-terminal beta-amino acid: aliphatic and aromatic &gt; OH-containing &gt; hydrogen, basic and polar. This chain is Beta-peptidyl aminopeptidase BapA, found in Sphingosinicella xenopeptidilytica.